Reading from the N-terminus, the 307-residue chain is MTSAQNESQALGDLAARQLANATKTVPQLSTITPRWLLHLLNWVPVEAGIYRVNRVVNPEQVAIKAEAGAGSEEPVPQTYVDYETSPREYTLRSISTLVDIHTRVSDLYSSPHDQIAQQLRLTIETIKERQELELINSPEYGLLAQATGRQTIQTLAGAPTPDDLDALITKVWKTPSFFLTHPLGIAAFGREATYRGVPPPVVSLFGPTQFITWHGIRLPSDKVPVEDGKTKFILVRTGEERQGVVGLFQPGLVGEQAPGLSVRFTGINQSAIATYLVTLYTSLAVLTDDALAVLDDVAVDQFHEYK.

It belongs to the encapsulin family. Family 2A subfamily. As to quaternary structure, homooligomeric. The encapsulin nanocompartment is formed by 60 subunits; monomers form pentamers which assemble to form shells. There are 12 charged pores where the pentamers meet as well as 3-fold axis channels and dimer channels.

It is found in the encapsulin nanocompartment. Shell component of a type 2A encapsulin nanocompartment. Forms encapsulin nanocompartments about 24 nm in diameter from 60 monomers. Probably encapsulates at least cysteine desulfurase (CyD) and allows passage of cysteine into its interior, probably involved in sulfur metabolism. This chain is Type 2A encapsulin shell protein, found in Mycobacterium avium.